Here is a 599-residue protein sequence, read N- to C-terminus: MLVRKLTLIGAALARAALALQQEDFVVNGELLPGVREIDRAEVPEMHAGLMPLEEDEDGRALFFWRMGEQCGKRCSNELIVWLNGGPGCSSMDGALMETGAFRVAEDGKLYLNSGSWHTRGTMLFVDQPVGTGFSRPGRDGRLRTELSQLADDFLLFMERYYAVFPEDRRRTLVLAGESYAGQYLPYFADAVVRRNAERAPEERYKLQNVMIGNGWVDPDLQSLSYVPFVSSRGLFGPETRNFQDILRDQEACQNAINHGPAKGFSHPECEGILPKLLSSIPGPDRPVQQCINMYDIRLRDVFPSCGMNWPADLPNVHKFFGTPGVLEALHVDPQVAGPWVECKSAVSEALVNAHSRPSVHLIPGLIEAGVKFVFFNGDQDVICNNMGVEMLIAELRWRGHMGFSNATENFDWYHSDADAKTLVAAGVVKRDGPVTFISVFNASHMVPFDVPRISRGIIDIERSATILGVKGDSRMLITVDTEEDVTLSTNAERNQQIRHNQLKRLNGDTRKFTIAVFGLTISSIIGVIVYFSMRLHYGAKIRAILTNPKSGTSSADDFSMDDEYTGTVMGDFHHGTHKKGQYYAVPDTDISSSELHSV.

The N-terminal stretch at 1–19 is a signal peptide; the sequence is MLVRKLTLIGAALARAALA. Residues 20 to 512 lie on the Lumenal side of the membrane; it reads LQQEDFVVNG…LKRLNGDTRK (493 aa). Residues Ser179 and Asp381 contribute to the active site. Asn406 and Asn442 each carry an N-linked (GlcNAc...) asparagine glycan. Residue His445 is part of the active site. Residues 513 to 533 traverse the membrane as a helical segment; that stretch reads FTIAVFGLTISSIIGVIVYFS. The Cytoplasmic segment spans residues 534 to 599; it reads MRLHYGAKIR…DISSSELHSV (66 aa).

The protein belongs to the peptidase S10 family.

Its subcellular location is the golgi apparatus. It localises to the trans-Golgi network membrane. The catalysed reaction is Preferential release of a C-terminal arginine or lysine residue.. Functionally, protease with a carboxypeptidase B-like function involved in the C-terminal processing of the lysine and arginine residues from protein precursors. Promotes cell fusion and is involved in the programmed cell death. The chain is Pheromone-processing carboxypeptidase KEX1 (KEX1) from Eremothecium gossypii (strain ATCC 10895 / CBS 109.51 / FGSC 9923 / NRRL Y-1056) (Yeast).